A 206-amino-acid chain; its full sequence is Small ribosomal subunit protein uS4A (206 aa).

An S4 RNA-binding domain is found at 98–163 (MRLDNVVYRL…SERFKMFAEN (66 aa)).

It belongs to the universal ribosomal protein uS4 family. Part of the 30S ribosomal subunit. Contacts protein S5. The interaction surface between S4 and S5 is involved in control of translational fidelity.

Functionally, one of the primary rRNA binding proteins, it binds directly to 16S rRNA where it nucleates assembly of the body of the 30S subunit. With S5 and S12 plays an important role in translational accuracy. The polypeptide is Small ribosomal subunit protein uS4A (Clostridium perfringens (strain SM101 / Type A)).